Reading from the N-terminus, the 265-residue chain is Arcelin-2 (265 aa).

The N-terminal stretch at 1–21 (MASSNLLTLALFLVLLTHANS) is a signal peptide. Residues asparagine 33 and asparagine 89 are each glycosylated (N-linked (GlcNAc...) asparagine). Cysteine 165 and cysteine 201 are disulfide-bonded.

It belongs to the leguminous lectin family.

Seed storage. This carbohydrate-binding lectin has toxic effects on bean bruchid pests. Antibiosis properties of legume lectins are proposed to be due to the lysis of epithelial cells of the intestine by binding to the carbohydrate moieties of these proteins. The chain is Arcelin-2 (ARC2) from Phaseolus vulgaris (Kidney bean).